Reading from the N-terminus, the 317-residue chain is Universal stress protein Mb2019 (317 aa).

ATP is bound by residues Gly13, 128-134, 142-143, Gly175, Asp208, 277-283, and 291-293; these read GYRGQGA, SV, GSHGRGG, and SVS.

This sequence belongs to the universal stress protein A family.

The polypeptide is Universal stress protein Mb2019 (Mycobacterium bovis (strain ATCC BAA-935 / AF2122/97)).